Reading from the N-terminus, the 152-residue chain is Ribosome maturation factor RimP (152 aa).

Belongs to the RimP family.

Its subcellular location is the cytoplasm. Required for maturation of 30S ribosomal subunits. The chain is Ribosome maturation factor RimP from Burkholderia multivorans (strain ATCC 17616 / 249).